The chain runs to 395 residues: Aspergillopepsin-1 (395 aa).

A signal peptide spans 1 to 20; the sequence is MVVFSKVTAVVVGLSTIVSA. The propeptide at 21–70 is activation peptide; it reads VPVVQPRKGFTINQVARPVTNKKTVNLPAVYANALTKYGGTVPDSVKAAA. Residues 86-392 enclose the Peptidase A1 domain; the sequence is YLTPVKVGGT…DSQGPRLGFA (307 aa). Catalysis depends on residues Asp102 and Asp284. The cysteines at positions 320 and 355 are disulfide-linked.

The protein belongs to the peptidase A1 family. Monomer.

Its subcellular location is the secreted. It carries out the reaction Hydrolysis of proteins with broad specificity. Generally favors hydrophobic residues in P1 and P1', but also accepts Lys in P1, which leads to activation of trypsinogen. Does not clot milk.. Secreted aspartic endopeptidase that allows assimilation of proteinaceous substrates. The scissile peptide bond is attacked by a nucleophilic water molecule activated by two aspartic residues in the active site. Shows a broad primary substrate specificity. Favors hydrophobic residues at the P1 and P1' positions, but also accepts a lysine residue in the P1 position, leading to the activation of trypsinogen and chymotrypsinogen A. This chain is Aspergillopepsin-1 (pepA), found in Aspergillus fumigatus (strain CBS 144.89 / FGSC A1163 / CEA10) (Neosartorya fumigata).